A 237-amino-acid chain; its full sequence is MRLQRGFTLLELLIAIAIFALLALATYRMFDSVMQTDQATRVQEQRMRELVRAMGALERDLTQAVERPVRDELGDNRGAFLSEGENDQIVEFTRGGWRNPLGQARSRLQRVRWSLSGETLERRYWLVLDRAQDSKPRVQQVLDGVTALSWRFLDKEHNWQGHWPTDEGSEEERLESLPLAVEMTLEHRHYGKLVRVWRLLDPPLKQDQPQGQPGGENGENGEGGVPQPPEGMPGAPE.

The propeptide at 1-6 (MRLQRG) is leader sequence. Phe7 is subject to N-methylphenylalanine. Residues 7–29 (FTLLELLIAIAIFALLALATYRM) form a helical membrane-spanning segment. The interval 203 to 237 (PLKQDQPQGQPGGENGENGEGGVPQPPEGMPGAPE) is disordered. Gly residues predominate over residues 212 to 224 (QPGGENGENGEGG). Positions 226-237 (PQPPEGMPGAPE) are enriched in pro residues.

Belongs to the GSP J family. In terms of assembly, type II secretion is composed of four main components: the outer membrane complex, the inner membrane complex, the cytoplasmic secretion ATPase and the periplasm-spanning pseudopilus. Forms the tip of the type II pseudopilus by interacting with XcpV, XcpU and XcpX. Interacts with core component XcpT. In terms of processing, cleaved by prepilin peptidase. Post-translationally, methylated by prepilin peptidase at the amino group of the N-terminal phenylalanine once the leader sequence is cleaved by prepilin peptidase.

The protein resides in the cell inner membrane. Component of the type II secretion system required for the energy-dependent secretion of extracellular factors such as proteases and toxins from the periplasm. Part of the pseudopilus tip complex that is critical for the recognition and binding of secretion substrates. Type II pseudopilus confers increased bacterial adhesive capabilities. The protein is Type II secretion system protein J (xcpW) of Pseudomonas aeruginosa (strain ATCC 15692 / DSM 22644 / CIP 104116 / JCM 14847 / LMG 12228 / 1C / PRS 101 / PAO1).